A 369-amino-acid chain; its full sequence is Cytoplasmic tRNA 2-thiolation protein 1 (369 aa).

This sequence belongs to the TtcA family. CTU1/NCS6/ATPBD3 subfamily.

It is found in the cytoplasm. The protein operates within tRNA modification; 5-methoxycarbonylmethyl-2-thiouridine-tRNA biosynthesis. Functionally, plays a central role in 2-thiolation of mcm(5)S(2)U at tRNA wobble positions of tRNA(Lys), tRNA(Glu) and tRNA(Gln). Directly binds tRNAs and probably acts by catalyzing adenylation of tRNAs, an intermediate required for 2-thiolation. It is unclear whether it acts as a sulfurtransferase that transfers sulfur from thiocarboxylated URM1 onto the uridine of tRNAs at wobble position. Prior mcm(5) tRNA modification by the elongator complex is required for 2-thiolation. May also be involved in protein urmylation. The protein is Cytoplasmic tRNA 2-thiolation protein 1 of Meyerozyma guilliermondii (strain ATCC 6260 / CBS 566 / DSM 6381 / JCM 1539 / NBRC 10279 / NRRL Y-324) (Yeast).